The following is a 125-amino-acid chain: uncharacterized protein (125 aa).

A chloroplast-targeting transit peptide spans 1 to 46 (MFFDTKVLNYPTIHKSISMASTMQRTSSSAASNERQLSQLQRRAPS).

It is found in the plastid. The protein resides in the chloroplast. This is an uncharacterized protein from Arabidopsis thaliana (Mouse-ear cress).